The following is a 592-amino-acid chain: Aspartate--tRNA(Asp/Asn) ligase (592 aa).

Glutamate 182 is a binding site for L-aspartate. Positions 206–209 (QIFK) are aspartate. L-aspartate is bound at residue arginine 228. ATP contacts are provided by residues 228 to 230 (RDE) and glutamine 237. L-aspartate is bound at residue histidine 455. Glutamate 489 is an ATP binding site. Position 496 (arginine 496) interacts with L-aspartate. ATP is bound at residue 541-544 (GLDR).

This sequence belongs to the class-II aminoacyl-tRNA synthetase family. Type 1 subfamily. As to quaternary structure, homodimer.

The protein localises to the cytoplasm. It catalyses the reaction tRNA(Asx) + L-aspartate + ATP = L-aspartyl-tRNA(Asx) + AMP + diphosphate. Functionally, aspartyl-tRNA synthetase with relaxed tRNA specificity since it is able to aspartylate not only its cognate tRNA(Asp) but also tRNA(Asn). Reaction proceeds in two steps: L-aspartate is first activated by ATP to form Asp-AMP and then transferred to the acceptor end of tRNA(Asp/Asn). The polypeptide is Aspartate--tRNA(Asp/Asn) ligase (Thermoanaerobacter pseudethanolicus (strain ATCC 33223 / 39E) (Clostridium thermohydrosulfuricum)).